A 447-amino-acid chain; its full sequence is Probable glycine dehydrogenase (decarboxylating) subunit 1 (447 aa).

It belongs to the GcvP family. N-terminal subunit subfamily. The glycine cleavage system is composed of four proteins: P, T, L and H. In this organism, the P 'protein' is a heterodimer of two subunits.

It carries out the reaction N(6)-[(R)-lipoyl]-L-lysyl-[glycine-cleavage complex H protein] + glycine + H(+) = N(6)-[(R)-S(8)-aminomethyldihydrolipoyl]-L-lysyl-[glycine-cleavage complex H protein] + CO2. In terms of biological role, the glycine cleavage system catalyzes the degradation of glycine. The P protein binds the alpha-amino group of glycine through its pyridoxal phosphate cofactor; CO(2) is released and the remaining methylamine moiety is then transferred to the lipoamide cofactor of the H protein. The polypeptide is Probable glycine dehydrogenase (decarboxylating) subunit 1 (Azorhizobium caulinodans (strain ATCC 43989 / DSM 5975 / JCM 20966 / LMG 6465 / NBRC 14845 / NCIMB 13405 / ORS 571)).